The primary structure comprises 957 residues: Receptor-like protein 34 (957 aa).

A signal peptide spans 1–31 (MKGSWVVSTSIIRITLSFTFLFICHFSDVLA). The Extracellular segment spans residues 32-910 (APTRHLCRPE…EEEDEDLISW (879 aa)). Residues N78, N101, N114, N143, N167, N191, and N215 are each glycosylated (N-linked (GlcNAc...) asparagine). LRR repeat units follow at residues 120–143 (LHFLTTLDRSHNDFEGQITSSIEN), 144–167 (LSHLTSLDLSYNRFSGQILNSIGN), 168–192 (LSRLTSLDLSFNQFSGQIPSSIGNL), 194–216 (HLTFLGLSGNRFFGQIPSSIGNL), 217–240 (SHLTFLGLSGNRFFGQFPSSIGGL), 241–264 (SNLTNLHLSYNKYSGQIPSSIGNL), 266–287 (QLIVLYLSVNNFYGEIPSSFGN), 288–312 (LNQLTRLDVSFNKLGGNFPNVLLNL), 313–336 (TGLSVVSLSNNKFTGTLPPNITSL), 338–360 (NLMAFYASDNAFTGTFPSFLFII), 361–384 (PSLTYLGLSGNQLKGTLEFGNISS), 386–409 (SNLQYLNIGSNNFIGPIPSSISKL), 412–434 (LQELGISHLNTQCRPVDFSIFSH), 435–459 (LKSLDDLRLSYLTTTTIDLNDILPY), 460–483 (FKTLRSLDLSGNLVSATNKSSVSS), 487–510 (SQSIQSLYLSGCGITDFPEILRTQ), 511–534 (HELGFLDVSNNKIKGQVPGWLWTL), and 535–557 (PNLFYLNLSNNTFIGFQRPTKPE). N242 and N263 each carry an N-linked (GlcNAc...) asparagine glycan. 2 N-linked (GlcNAc...) asparagine glycosylation sites follow: N311 and N332. Residue N381 is glycosylated (N-linked (GlcNAc...) asparagine). Residue N477 is glycosylated (N-linked (GlcNAc...) asparagine). N541, N544, N569, N593, N608, and N618 each carry an N-linked (GlcNAc...) asparagine glycan. The LRR 19; degenerate repeat unit spans residues 558 to 580 (PSMAYLLGSNNNFTGKIPSFICE). LRR repeat units lie at residues 581 to 605 (LRSLYTLDLSDNNFSGSIPRCMENL), 606 to 630 (KSNLSELNLRQNNLSGGFPEHIFES), 632 to 652 (RSLDVGHNQLVGKLPRSLRFF), 653 to 675 (SNLEVLNVESNRINDMFPFWLSS), 677 to 698 (QKLQVLVLRSNAFHGPINQALF), 699 to 722 (PKLRIIDISHNHFNGSLPTEYFVE), 765 to 789 (LTIYTAVDFSGNKFEGEIPKSIGLL), 790 to 813 (KELHVLNLSNNAFTGHIPSSIGNL), 815 to 837 (ALESLDVSQNKLYGEIPQEIGNL), and 839 to 862 (LLSYMNFSHNQLTGLVPGGQQFLT). N-linked (GlcNAc...) asparagine glycosylation is present at N712. N796, N812, N836, and N844 each carry an N-linked (GlcNAc...) asparagine glycan. The chain crosses the membrane as a helical span at residues 911–931 (IAAAIGFGPGIAFGLMFGYIL). At 932–957 (VSYKPEWFMNPFGRNNRRRKRHTTTH) the chain is on the cytoplasmic side.

Belongs to the RLP family.

The protein resides in the cell membrane. The polypeptide is Receptor-like protein 34 (Arabidopsis thaliana (Mouse-ear cress)).